A 237-amino-acid chain; its full sequence is Large ribosomal subunit protein uL2 (237 aa).

The tract at residues 202–237 (FGGGNRKHPGKPTTVSRNAPPGRKVGHIAARRTGKR) is disordered. Residues 225–237 (KVGHIAARRTGKR) show a composition bias toward basic residues.

The protein belongs to the universal ribosomal protein uL2 family. Part of the 50S ribosomal subunit. Forms a bridge to the 30S subunit in the 70S ribosome.

In terms of biological role, one of the primary rRNA binding proteins. Required for association of the 30S and 50S subunits to form the 70S ribosome, for tRNA binding and peptide bond formation. It has been suggested to have peptidyltransferase activity; this is somewhat controversial. Makes several contacts with the 16S rRNA in the 70S ribosome. In Methanococcoides burtonii (strain DSM 6242 / NBRC 107633 / OCM 468 / ACE-M), this protein is Large ribosomal subunit protein uL2.